A 901-amino-acid polypeptide reads, in one-letter code: Cyanophycin synthetase (901 aa).

In terms of domain architecture, ATP-grasp spans 224 to 478 (KRILAASGVP…VAGAVMDMLF (255 aa)). Residue 493 to 499 (GTNGKTT) coordinates ATP.

It in the C-terminal section; belongs to the MurCDEF family. In terms of assembly, homodimer.

It catalyses the reaction [L-4-(L-arginin-2-N-yl)aspartate](n) + L-aspartate + ATP = [L-4-(L-arginin-2-N-yl)aspartate](n)-L-aspartate + ADP + phosphate + H(+). The catalysed reaction is [L-4-(L-arginin-2-N-yl)aspartate](n)-L-aspartate + L-arginine + ATP = [L-4-(L-arginin-2-N-yl)aspartate](n+1) + ADP + phosphate + H(+). Catalyzes the ATP-dependent polymerization of arginine and aspartate to multi-L-arginyl-poly-L-aspartic acid (cyanophycin; a water-insoluble reserve polymer). This Trichormus variabilis (strain ATCC 29413 / PCC 7937) (Anabaena variabilis) protein is Cyanophycin synthetase (cphA).